The primary structure comprises 304 residues: Acetyl-coenzyme A carboxylase carboxyl transferase subunit beta (304 aa).

The CoA carboxyltransferase N-terminal domain occupies 23 to 292 (VWTKCDSCGQ…PNPDAPREGE (270 aa)). Zn(2+) contacts are provided by C27, C30, C46, and C49. The C4-type zinc finger occupies 27–49 (CDSCGQVLYRAELERNLEVCPKC). Residues 281 to 304 (PAPNPDAPREGEVVPPVPDQEPEA) are disordered. The span at 295–304 (PPVPDQEPEA) shows a compositional bias: pro residues.

The protein belongs to the AccD/PCCB family. In terms of assembly, acetyl-CoA carboxylase is a heterohexamer composed of biotin carboxyl carrier protein (AccB), biotin carboxylase (AccC) and two subunits each of ACCase subunit alpha (AccA) and ACCase subunit beta (AccD). The cofactor is Zn(2+).

The protein resides in the cytoplasm. The enzyme catalyses N(6)-carboxybiotinyl-L-lysyl-[protein] + acetyl-CoA = N(6)-biotinyl-L-lysyl-[protein] + malonyl-CoA. It functions in the pathway lipid metabolism; malonyl-CoA biosynthesis; malonyl-CoA from acetyl-CoA: step 1/1. Functionally, component of the acetyl coenzyme A carboxylase (ACC) complex. Biotin carboxylase (BC) catalyzes the carboxylation of biotin on its carrier protein (BCCP) and then the CO(2) group is transferred by the transcarboxylase to acetyl-CoA to form malonyl-CoA. The protein is Acetyl-coenzyme A carboxylase carboxyl transferase subunit beta of Citrobacter koseri (strain ATCC BAA-895 / CDC 4225-83 / SGSC4696).